The chain runs to 274 residues: Large ribosomal subunit protein uL2cz (274 aa).

Disordered stretches follow at residues 1–25 and 224–274; these read MAIH…VKSN and NPVD…RRSK. Positions 7 to 25 are enriched in polar residues; it reads KTSTPSTRNGTVDSQVKSN.

It belongs to the universal ribosomal protein uL2 family. Part of the 50S ribosomal subunit.

Its subcellular location is the plastid. The protein resides in the chloroplast. In Atropa belladonna (Belladonna), this protein is Large ribosomal subunit protein uL2cz (rpl2-A).